The sequence spans 317 residues: Olfactory receptor 6Q1 (317 aa).

Residues 1–27 (MQPYTKNWTQVTEFVMMGFAGIHEAHL) lie on the Extracellular side of the membrane. Asn7 carries N-linked (GlcNAc...) asparagine glycosylation. The helical transmembrane segment at 28-48 (LFFILFLTMYLFTLVENLAII) threads the bilayer. Residues 49–56 (LVVGLDHR) lie on the Cytoplasmic side of the membrane. A helical membrane pass occupies residues 57–77 (LRRPMYFFLTHLSCLEIWYTS). The Extracellular segment spans residues 78-103 (VTVPKMLAGFIGVDGGKNISYADCLS). A glycan (N-linked (GlcNAc...) asparagine) is linked at Asn95. Cys101 and Cys193 are oxidised to a cystine. The helical transmembrane segment at 104–124 (QLFIFTFLGATECFLLAAMAY) threads the bilayer. Over 125–143 (DRYVAICMPLHYGAFVSWG) the chain is Cytoplasmic. A helical transmembrane segment spans residues 144 to 164 (TCIRLAAACWLVGFLTPILPI). Residues 165-201 (YLLSQLTFYGPNVIDHFSCDASPLLALSCSDVTWKET) lie on the Extracellular side of the membrane. Residues 202–221 (VDFLVSLAVLLASSMVIAVS) form a helical membrane-spanning segment. The Cytoplasmic portion of the chain corresponds to 222 to 241 (YGNIVWTLLHIRSAAERWKA). A helical membrane pass occupies residues 242-262 (FSTCAAHLTVVSLFYGTLFFM). At 263–275 (YVQTKVTSSINFN) the chain is on the extracellular side. Residues 276 to 296 (KVVSVFYSVVTPMLNPLIYSL) traverse the membrane as a helical segment. Over 297–317 (RNKEVKGALGRVFSLNFWKGQ) the chain is Cytoplasmic.

Belongs to the G-protein coupled receptor 1 family.

The protein resides in the cell membrane. In terms of biological role, odorant receptor. This chain is Olfactory receptor 6Q1 (OR6Q1), found in Homo sapiens (Human).